We begin with the raw amino-acid sequence, 244 residues long: MRTRYLIGNWKTNKNLKDAVSFVEQFQQNKLNYNAKIGIAPVYVHLTEIKKIISDSLLLFAQDANFIESGSYTGTVSFTQLQDIGVNNSIIGHSERRKYYNETSAVINQKLFACLKASMQVVLCIGEALGQEISFLKTDLTNCLDTIDKSLIKNLVIAYEPLWAIGTGKTATPEVANQTIKTIREYINDLYDENVANNISILYGGSVDHNNIQKLAIMEQIDGFLVGKASLEIKNFLEMARVYA.

Residue 9–11 (NWK) participates in substrate binding. Histidine 93 acts as the Electrophile in catalysis. Glutamate 160 functions as the Proton acceptor in the catalytic mechanism. The substrate site is built by glycine 166 and serine 206.

It belongs to the triosephosphate isomerase family. Homodimer.

The protein resides in the cytoplasm. The enzyme catalyses D-glyceraldehyde 3-phosphate = dihydroxyacetone phosphate. Its pathway is carbohydrate biosynthesis; gluconeogenesis. It functions in the pathway carbohydrate degradation; glycolysis; D-glyceraldehyde 3-phosphate from glycerone phosphate: step 1/1. Functionally, involved in the gluconeogenesis. Catalyzes stereospecifically the conversion of dihydroxyacetone phosphate (DHAP) to D-glyceraldehyde-3-phosphate (G3P). This chain is Triosephosphate isomerase, found in Mycoplasma genitalium (strain ATCC 33530 / DSM 19775 / NCTC 10195 / G37) (Mycoplasmoides genitalium).